Reading from the N-terminus, the 202-residue chain is IMP cyclohydrolase (202 aa).

Belongs to the archaeal IMP cyclohydrolase family.

The enzyme catalyses IMP + H2O = 5-formamido-1-(5-phospho-D-ribosyl)imidazole-4-carboxamide. Its pathway is purine metabolism; IMP biosynthesis via de novo pathway; IMP from 5-formamido-1-(5-phospho-D-ribosyl)imidazole-4-carboxamide: step 1/1. Its function is as follows. Catalyzes the cyclization of 5-formylamidoimidazole-4-carboxamide ribonucleotide to IMP. This chain is IMP cyclohydrolase, found in Methanosphaera stadtmanae (strain ATCC 43021 / DSM 3091 / JCM 11832 / MCB-3).